The chain runs to 211 residues: Pyridoxine/pyridoxamine 5'-phosphate oxidase (211 aa).

Residues arginine 7–tyrosine 10 and lysine 65 contribute to the substrate site. FMN-binding positions include arginine 60 to lysine 65, tyrosine 75 to threonine 76, arginine 81, lysine 82, and glutamine 104. Substrate-binding residues include tyrosine 122, arginine 126, and serine 130. FMN contacts are provided by residues glutamine 139–serine 140 and tryptophan 184. Position 190 to 192 (arginine 190 to histidine 192) interacts with substrate. FMN is bound at residue arginine 194.

Belongs to the pyridoxamine 5'-phosphate oxidase family. As to quaternary structure, homodimer. It depends on FMN as a cofactor.

The enzyme catalyses pyridoxamine 5'-phosphate + O2 + H2O = pyridoxal 5'-phosphate + H2O2 + NH4(+). It catalyses the reaction pyridoxine 5'-phosphate + O2 = pyridoxal 5'-phosphate + H2O2. Its pathway is cofactor metabolism; pyridoxal 5'-phosphate salvage; pyridoxal 5'-phosphate from pyridoxamine 5'-phosphate: step 1/1. It participates in cofactor metabolism; pyridoxal 5'-phosphate salvage; pyridoxal 5'-phosphate from pyridoxine 5'-phosphate: step 1/1. Its function is as follows. Catalyzes the oxidation of either pyridoxine 5'-phosphate (PNP) or pyridoxamine 5'-phosphate (PMP) into pyridoxal 5'-phosphate (PLP). The polypeptide is Pyridoxine/pyridoxamine 5'-phosphate oxidase (Photobacterium profundum (strain SS9)).